The sequence spans 188 residues: Probable chemoreceptor glutamine deamidase CheD (188 aa).

This sequence belongs to the CheD family.

It catalyses the reaction L-glutaminyl-[protein] + H2O = L-glutamyl-[protein] + NH4(+). Functionally, probably deamidates glutamine residues to glutamate on methyl-accepting chemotaxis receptors (MCPs), playing an important role in chemotaxis. This is Probable chemoreceptor glutamine deamidase CheD from Caulobacter sp. (strain K31).